The sequence spans 281 residues: Putative phosphatase/phosphodiesterase MPN_349 (281 aa).

Residues aspartate 12, glutamate 43, asparagine 44, and asparagine 71 each coordinate Fe cation. Histidine 72 functions as the Proton donor in the catalytic mechanism. The Fe cation site is built by histidine 158, histidine 183, and histidine 185.

This sequence belongs to the YmdB-like family. Requires Fe(3+) as cofactor.

The polypeptide is Putative phosphatase/phosphodiesterase MPN_349 (Mycoplasma pneumoniae (strain ATCC 29342 / M129 / Subtype 1) (Mycoplasmoides pneumoniae)).